A 695-amino-acid chain; its full sequence is Elongation factor G 2 (695 aa).

A tr-type G domain is found at 5–280; the sequence is SLYRNIGIFA…AVVDYLPSPT (276 aa). GTP-binding positions include 14 to 21, 78 to 82, and 132 to 135; these read AHVDAGKT, DTPGH, and NKLD.

This sequence belongs to the TRAFAC class translation factor GTPase superfamily. Classic translation factor GTPase family. EF-G/EF-2 subfamily.

It is found in the cytoplasm. Its function is as follows. Catalyzes the GTP-dependent ribosomal translocation step during translation elongation. During this step, the ribosome changes from the pre-translocational (PRE) to the post-translocational (POST) state as the newly formed A-site-bound peptidyl-tRNA and P-site-bound deacylated tRNA move to the P and E sites, respectively. Catalyzes the coordinated movement of the two tRNA molecules, the mRNA and conformational changes in the ribosome. The sequence is that of Elongation factor G 2 from Vibrio cholerae serotype O1 (strain ATCC 39315 / El Tor Inaba N16961).